The chain runs to 394 residues: Immune-associated nucleotide-binding protein 12 (394 aa).

Residues 45–251 form the AIG1-type G domain; it reads KPARTLLLVG…YMADLSHEIR (207 aa). Positions 54–61 are G1; that stretch reads GRSGNGKS. Residues 54–62 and Ser75 contribute to the GTP site; that span reads GRSGNGKSA. The segment at 81–85 is G2; sequence GVTTA. Positions 103–106 are G3; sequence DTPG. Residues 173–176 form a G4 region; it reads TNED. The tract at residues 210–212 is G5; sequence RNR. Asn211 is a binding site for GTP. The stretch at 289–387 forms a coiled coil; the sequence is NQQLRQMMER…KQMATDLQKS (99 aa).

This sequence belongs to the TRAFAC class TrmE-Era-EngA-EngB-Septin-like GTPase superfamily. AIG1/Toc34/Toc159-like paraseptin GTPase family. IAN subfamily.

This is Immune-associated nucleotide-binding protein 12 from Arabidopsis thaliana (Mouse-ear cress).